Consider the following 380-residue polypeptide: Cytochrome b (380 aa).

The next 4 membrane-spanning stretches (helical) occupy residues 34–54, 78–99, 114–134, and 179–199; these read FGSL…LLAM, WLIR…FLHI, WNTG…GYVL, and FFAL…THLM. 2 residues coordinate heme b: His-84 and His-98. Heme b contacts are provided by His-183 and His-197. His-202 serves as a coordination point for a ubiquinone. 4 helical membrane passes run 227–247, 289–309, 321–341, and 348–368; these read LKDI…ALFS, LGGV…PFLH, LSQA…WVGS, and FIII…ILFP.

This sequence belongs to the cytochrome b family. In terms of assembly, the cytochrome bc1 complex contains 11 subunits: 3 respiratory subunits (MT-CYB, CYC1 and UQCRFS1), 2 core proteins (UQCRC1 and UQCRC2) and 6 low-molecular weight proteins (UQCRH/QCR6, UQCRB/QCR7, UQCRQ/QCR8, UQCR10/QCR9, UQCR11/QCR10 and a cleavage product of UQCRFS1). This cytochrome bc1 complex then forms a dimer. Requires heme b as cofactor.

The protein localises to the mitochondrion inner membrane. Its function is as follows. Component of the ubiquinol-cytochrome c reductase complex (complex III or cytochrome b-c1 complex) that is part of the mitochondrial respiratory chain. The b-c1 complex mediates electron transfer from ubiquinol to cytochrome c. Contributes to the generation of a proton gradient across the mitochondrial membrane that is then used for ATP synthesis. This Syrmaticus reevesii (Reeves's pheasant) protein is Cytochrome b (MT-CYB).